The primary structure comprises 158 residues: Probable cyclic pyranopterin monophosphate synthase (158 aa).

Substrate contacts are provided by residues 75 to 77 (MCH) and 111 to 112 (ME). Residue Asp126 is part of the active site.

This sequence belongs to the MoaC family. Homohexamer; trimer of dimers.

It catalyses the reaction (8S)-3',8-cyclo-7,8-dihydroguanosine 5'-triphosphate = cyclic pyranopterin phosphate + diphosphate. It participates in cofactor biosynthesis; molybdopterin biosynthesis. In terms of biological role, catalyzes the conversion of (8S)-3',8-cyclo-7,8-dihydroguanosine 5'-triphosphate to cyclic pyranopterin monophosphate (cPMP). The chain is Probable cyclic pyranopterin monophosphate synthase from Methanocorpusculum labreanum (strain ATCC 43576 / DSM 4855 / Z).